We begin with the raw amino-acid sequence, 261 residues long: Lysosome-associated membrane glycoprotein 5 (261 aa).

A signal peptide spans 1 to 29 (MDLQGRAVPSVDRLRVLLMLFHTMAQIMA). Residues 30–234 (EQEVENLSGL…AVDEREQLEE (205 aa)) lie on the Extracellular side of the membrane. Asparagine 35, asparagine 53, and asparagine 126 each carry an N-linked (GlcNAc...) asparagine glycan. A helical transmembrane segment spans residues 235-255 (TLPLILGLILGLVIVVTLAIY). The Cytoplasmic portion of the chain corresponds to 256 to 261 (HVHPQK).

This sequence belongs to the LAMP family. Post-translationally, glycosylated.

The protein resides in the cytoplasmic vesicle membrane. It is found in the cell membrane. The protein localises to the cell projection. Its subcellular location is the dendrite. It localises to the cytoplasmic vesicle. The protein resides in the secretory vesicle. It is found in the synaptic vesicle membrane. The protein localises to the growth cone membrane. Its subcellular location is the early endosome membrane. It localises to the recycling endosome. The protein resides in the endoplasmic reticulum-Golgi intermediate compartment membrane. It is found in the endosome membrane. Its function is as follows. Plays a role in short-term synaptic plasticity in a subset of GABAergic neurons in the brain. The polypeptide is Lysosome-associated membrane glycoprotein 5 (LAMP5) (Pongo abelii (Sumatran orangutan)).